A 428-amino-acid chain; its full sequence is Palmitoyltransferase ZDHHC23-B (428 aa).

The Cytoplasmic segment spans residues 1-82; sequence MSIMKKRSSR…RVPWISGARQ (82 aa). Residues 83 to 99 form a helical membrane-spanning segment; sequence IDVSLIPPLILLPVFLH. At 100–105 the chain is on the lumenal side; sequence IAALHY. A helical membrane pass occupies residues 106–125; it reads LLGIIMLTAMPITVLWYYFF. At 126 to 132 the chain is on the cytoplasmic side; the sequence is THRKKGR. A helical transmembrane segment spans residues 133-153; it reads TLFFLGLALFSLFYMFYLFLT. The Lumenal segment spans residues 154-160; the sequence is QVVPRGE. The chain crosses the membrane as a helical span at residues 161 to 181; the sequence is VTELQLAVVTAGVALTVIFLM. Topologically, residues 182-294 are cytoplasmic; the sequence is LTKRGPGLVR…SCVGLANHRT (113 aa). The 51-residue stretch at 250–300 folds into the DHHC domain; that stretch reads NWCAVCKVVRPQRAGHCRICGVCVLRLDHHCVWINSCVGLANHRTFLLTLL. Cys280 acts as the S-palmitoyl cysteine intermediate in catalysis. The chain crosses the membrane as a helical span at residues 295–315; it reads FLLTLLFFLLTSIYGISLVLA. The Lumenal portion of the chain corresponds to 316-350; the sequence is SVCPDQRVLTALFYCPDVYSQYSSALCFTCAWYSS. Residues 351-371 traverse the membrane as a helical segment; that stretch reads IVTGGLLHLLLLQILNISLNV. Residues 372–428 lie on the Cytoplasmic side of the membrane; that stretch reads TEREARLALREKSAQRRLWGLIVHTGHYSRGFWSNWTEFLTMTEDTQPAGHKTEDLV.

It belongs to the DHHC palmitoyltransferase family.

Its subcellular location is the golgi apparatus membrane. The protein localises to the golgi apparatus. It is found in the trans-Golgi network membrane. It catalyses the reaction L-cysteinyl-[protein] + hexadecanoyl-CoA = S-hexadecanoyl-L-cysteinyl-[protein] + CoA. Functionally, palmitoyltransferase that could catalyze the addition of palmitate onto various protein substrates and be involved in a variety of cellular processes. This chain is Palmitoyltransferase ZDHHC23-B, found in Danio rerio (Zebrafish).